Reading from the N-terminus, the 340-residue chain is Cyclic GMP-AMP synthase-like receptor 3 (340 aa).

Residues Ser62 and 74-76 (EAD) contribute to the ATP site. Mg(2+)-binding residues include Glu74, Asp76, and Asp177. Residues Lys241 and 255–259 (SYHLK) contribute to the ATP site. Positions 267 and 270 each coordinate Mn(2+).

It belongs to the mab-21 family. Mg(2+) serves as cofactor. Requires Mn(2+) as cofactor.

The enzyme catalyses 2 ATP = 3',3'-c-di-AMP + 2 diphosphate. In terms of biological role, nucleotidyltransferase that catalyzes the formation of cyclic di-AMP (3',3'-c-di-AMP) from 2 molecules of ATP and plays a key role in innate immunity. Acts as a key sensor of double-stranded RNA (dsRNA), the presence of dsRNA in the cytoplasm being a danger signal that triggers the immune responses. Directly binds dsRNA, activating the nucleotidyltransferase activity, leading to synthesis of 3',3'-c-di-AMP, a second messenger that binds to and activates Sting, thereby triggering the immune response via activation of the NF-kappa-B transcription factor. This is Cyclic GMP-AMP synthase-like receptor 3 from Stylophora pistillata (Smooth cauliflower coral).